The sequence spans 416 residues: Serine hydroxymethyltransferase (416 aa).

Residues L118 and 122–124 contribute to the (6S)-5,6,7,8-tetrahydrofolate site; that span reads GHL. An N6-(pyridoxal phosphate)lysine modification is found at K226. Residues E242 and 350–352 each bind (6S)-5,6,7,8-tetrahydrofolate; that span reads SPF.

Belongs to the SHMT family. Homodimer. Pyridoxal 5'-phosphate serves as cofactor.

Its subcellular location is the cytoplasm. It carries out the reaction (6R)-5,10-methylene-5,6,7,8-tetrahydrofolate + glycine + H2O = (6S)-5,6,7,8-tetrahydrofolate + L-serine. The protein operates within one-carbon metabolism; tetrahydrofolate interconversion. It functions in the pathway amino-acid biosynthesis; glycine biosynthesis; glycine from L-serine: step 1/1. Catalyzes the reversible interconversion of serine and glycine with tetrahydrofolate (THF) serving as the one-carbon carrier. This reaction serves as the major source of one-carbon groups required for the biosynthesis of purines, thymidylate, methionine, and other important biomolecules. Also exhibits THF-independent aldolase activity toward beta-hydroxyamino acids, producing glycine and aldehydes, via a retro-aldol mechanism. This chain is Serine hydroxymethyltransferase, found in Helicobacter pylori (strain G27).